A 445-amino-acid chain; its full sequence is Xylose isomerase (445 aa).

Residues histidine 99 and aspartate 102 contribute to the active site. The Mg(2+) site is built by glutamate 230, glutamate 266, histidine 269, aspartate 294, aspartate 305, aspartate 307, and aspartate 337.

Belongs to the xylose isomerase family. In terms of assembly, homotetramer. Requires Mg(2+) as cofactor.

The protein localises to the cytoplasm. The catalysed reaction is alpha-D-xylose = alpha-D-xylulofuranose. This Geobacillus kaustophilus (strain HTA426) protein is Xylose isomerase.